We begin with the raw amino-acid sequence, 509 residues long: MEEIQRYLQLERSQQHDFLYPLIFQEYIYTFAHDRGFSRSILSENPGYDNKSSLLIVKRLITRMYQQNHFIISPNDSNQNPFWARNKNLYSQIISEGFAFIVEIPFSIRLISCLEGKKIVKSQNLRSIHSIFPFLEDNFSHLNFVLDILIPHSVHVEILVQTLRYWVKDASSLHLLRFFLNEYCNWNSLITPKKASSSFSKRNQRLFLFLYNSHVCEYESIFVFLRNQSSHLRSTSSGVLLERIYFYRKIERLVNVFVKVKDFQANLWFVKEPCMHYIRYQRKSILASKGTSLFMNKWKCYFVTFWQWHFSLWFHPSRIYINQLSNHSLEFLGYLSSVRINPSVVRSQILENAFLINNAIKKFDTLVPIIPLIASLAKAKFCNVLGHPVSKPGRADLSDSNIIDRFGCICRNLSHYHSGSSKKKSLYRIKYILRLSCARTLARKHKSTVRAFLKRLGSEFLEQFLMSEEDVLFLTFQKASSTLRGVYRSRIWYLDIISINDLANHKSKF.

The protein belongs to the intron maturase 2 family. MatK subfamily.

The protein resides in the plastid. It is found in the chloroplast. In terms of biological role, usually encoded in the trnK tRNA gene intron. Probably assists in splicing its own and other chloroplast group II introns. The chain is Maturase K from Ibicella lutea (Yellow unicorn-plant).